A 171-amino-acid polypeptide reads, in one-letter code: Adenine phosphoribosyltransferase (171 aa).

This sequence belongs to the purine/pyrimidine phosphoribosyltransferase family. Homodimer.

It localises to the cytoplasm. The enzyme catalyses AMP + diphosphate = 5-phospho-alpha-D-ribose 1-diphosphate + adenine. The protein operates within purine metabolism; AMP biosynthesis via salvage pathway; AMP from adenine: step 1/1. In terms of biological role, catalyzes a salvage reaction resulting in the formation of AMP, that is energically less costly than de novo synthesis. The sequence is that of Adenine phosphoribosyltransferase from Shouchella clausii (strain KSM-K16) (Alkalihalobacillus clausii).